The primary structure comprises 173 residues: Probable DNA-directed RNA polymerase subunit delta (173 aa).

In terms of domain architecture, HTH HARE-type spans 14-81; that stretch reads LSMIELGVKI…GSGMWGLKRW (68 aa). The segment at 86–173 is disordered; the sequence is QAEEEITEEP…EDENDDDNTR (88 aa). Over residues 109–173 the composition is skewed to acidic residues; the sequence is IDDVDDDLDV…EDENDDDNTR (65 aa).

It belongs to the RpoE family. As to quaternary structure, RNAP is composed of a core of 2 alpha, a beta and a beta' subunits. The core is associated with a delta subunit and one of several sigma factors.

Functionally, participates in both the initiation and recycling phases of transcription. In the presence of the delta subunit, RNAP displays an increased specificity of transcription, a decreased affinity for nucleic acids, and an increased efficiency of RNA synthesis because of enhanced recycling. This is Probable DNA-directed RNA polymerase subunit delta from Oceanobacillus iheyensis (strain DSM 14371 / CIP 107618 / JCM 11309 / KCTC 3954 / HTE831).